Here is a 160-residue protein sequence, read N- to C-terminus: Protein-export protein SecB (160 aa).

It belongs to the SecB family. As to quaternary structure, homotetramer, a dimer of dimers. One homotetramer interacts with 1 SecA dimer.

Its subcellular location is the cytoplasm. One of the proteins required for the normal export of preproteins out of the cell cytoplasm. It is a molecular chaperone that binds to a subset of precursor proteins, maintaining them in a translocation-competent state. It also specifically binds to its receptor SecA. The sequence is that of Protein-export protein SecB from Rhizobium johnstonii (strain DSM 114642 / LMG 32736 / 3841) (Rhizobium leguminosarum bv. viciae).